The chain runs to 344 residues: L-rhamnose-proton symporter (344 aa).

10 consecutive transmembrane segments (helical) span residues 4 to 24, 38 to 58, 68 to 88, 101 to 121, 137 to 157, 175 to 195, 207 to 227, 255 to 275, 290 to 310, and 324 to 344; these read PILL…CFYA, WSLG…WWLL, FDMA…IGNI, MGIG…TPVL, TLLG…AGLL, LILA…MDAA, INAL…GAVV, LIAN…QFFF, ISWM…GLLF, and LVLG…GMAA.

The protein belongs to the L-rhamnose transporter (TC 2.A.7.6) family.

The protein resides in the cell inner membrane. The enzyme catalyses L-rhamnopyranose(in) + H(+)(in) = L-rhamnopyranose(out) + H(+)(out). Uptake of L-rhamnose across the cytoplasmic membrane with the concomitant transport of protons into the cell (symport system). The polypeptide is L-rhamnose-proton symporter (Pectobacterium carotovorum subsp. carotovorum (strain PC1)).